Reading from the N-terminus, the 426-residue chain is MKSWISRPVPQLPGRMPAVRIFDTAVGAYSTLDATGEQSLYVCGITPYDATHMGHAASYVAFDLLNRAWRDGGQRVAYVQNVTDVDDPLLERATATGVDWRDLAASQIELFQTDMAALNVLAPDHYVGAVESIPEIVPAIERLLHLGLAYRVTGTPGEPDGDVYYDVEAASKHSAEAKDAWTLGSVSGLSETEMLELFAERGGDPGRRGKRQALDPLLWRVARDGEPSWAGGELGSGRPGWHIECTVIAQKYLPAPFTVQGGGSDLIFPHHEMGAGHAYSLTGVPLARHFAHAGMVGLDGEKMSKSKGNLVLVSKLRAAGEEPAAIRLAILAHHYRTDWSWTEAGFAQAKTRLAEWRDALTMAPGESAATLIAEMRSELANDLNAPGALAAVDRWAVAAKQQAGAGSPMDQALVSDAVNALLGVEL.

Cysteine 43 is a Zn(2+) binding site. L-cysteinyl-5'-AMP is bound by residues 43–46 (CGIT), serine 58, and 81–83 (NVT). The 'HIGH' region signature appears at 45–55 (ITPYDATHMGH). The short motif at 200-205 (ERGGDP) is the 'ERGGDP' region element. Position 241 (tryptophan 241) interacts with L-cysteinyl-5'-AMP. Residue cysteine 245 participates in Zn(2+) binding. 263-265 (GSD) lines the L-cysteinyl-5'-AMP pocket. Histidine 270 contacts Zn(2+). Valine 296 is an L-cysteinyl-5'-AMP binding site. Positions 302 to 306 (KMSKS) match the 'KMSKS' region motif.

It belongs to the class-I aminoacyl-tRNA synthetase family. MshC subfamily. Monomer. It depends on Zn(2+) as a cofactor.

The catalysed reaction is 1D-myo-inositol 2-amino-2-deoxy-alpha-D-glucopyranoside + L-cysteine + ATP = 1D-myo-inositol 2-(L-cysteinylamino)-2-deoxy-alpha-D-glucopyranoside + AMP + diphosphate + H(+). Functionally, catalyzes the ATP-dependent condensation of GlcN-Ins and L-cysteine to form L-Cys-GlcN-Ins. In Arthrobacter sp. (strain FB24), this protein is L-cysteine:1D-myo-inositol 2-amino-2-deoxy-alpha-D-glucopyranoside ligase.